The sequence spans 34 residues: Photosystem II reaction center protein M (34 aa).

Residues 5-25 (ILGLIATTLFILIPTSFLLIL) traverse the membrane as a helical segment.

The protein belongs to the PsbM family. In terms of assembly, PSII is composed of 1 copy each of membrane proteins PsbA, PsbB, PsbC, PsbD, PsbE, PsbF, PsbH, PsbI, PsbJ, PsbK, PsbL, PsbM, PsbT, PsbX, PsbY, PsbZ, Psb30/Ycf12, at least 3 peripheral proteins of the oxygen-evolving complex and a large number of cofactors. It forms dimeric complexes.

It localises to the plastid. The protein resides in the chloroplast thylakoid membrane. In terms of biological role, one of the components of the core complex of photosystem II (PSII). PSII is a light-driven water:plastoquinone oxidoreductase that uses light energy to abstract electrons from H(2)O, generating O(2) and a proton gradient subsequently used for ATP formation. It consists of a core antenna complex that captures photons, and an electron transfer chain that converts photonic excitation into a charge separation. This subunit is found at the monomer-monomer interface. The protein is Photosystem II reaction center protein M of Pleurastrum terricola (Filamentous green alga).